The chain runs to 410 residues: Elongation factor Tu, chloroplastic (410 aa).

The 205-residue stretch at Lys-10–Gln-214 folds into the tr-type G domain. Residues Gly-19–Thr-26 are G1. GTP is bound at residue Gly-19–Thr-26. Thr-26 contributes to the Mg(2+) binding site. The G2 stretch occupies residues Gly-60 to Asn-64. The G3 stretch occupies residues Asp-81 to Gly-84. GTP is bound by residues Asp-81–His-85 and Asn-136–Asp-139. The segment at Asn-136–Asp-139 is G4. The G5 stretch occupies residues Ser-174–Leu-176.

This sequence belongs to the TRAFAC class translation factor GTPase superfamily. Classic translation factor GTPase family. EF-Tu/EF-1A subfamily.

It is found in the plastid. Its subcellular location is the chloroplast. It carries out the reaction GTP + H2O = GDP + phosphate + H(+). Functionally, GTP hydrolase that promotes the GTP-dependent binding of aminoacyl-tRNA to the A-site of ribosomes during protein biosynthesis. This is Elongation factor Tu, chloroplastic (tufA) from Mesostigma viride (Green alga).